The primary structure comprises 895 residues: Protein translocase subunit SecA (895 aa).

ATP contacts are provided by residues Q90, 108-112, and D498; that span reads GEGKS.

The protein belongs to the SecA family.

It is found in the plastid. It localises to the chloroplast stroma. The protein resides in the chloroplast thylakoid membrane. It carries out the reaction ATP + H2O + cellular proteinSide 1 = ADP + phosphate + cellular proteinSide 2.. In terms of biological role, has a central role in coupling the hydrolysis of ATP to the transfer of proteins across the thylakoid membrane. The polypeptide is Protein translocase subunit SecA (Cyanidium caldarium (Red alga)).